Reading from the N-terminus, the 342-residue chain is Protein-glutamate methylesterase/protein-glutamine glutaminase 1 (342 aa).

The Response regulatory domain occupies 2–119; sequence RVAIVNDMPL…GDPKAAAQRL (118 aa). Asp-53 carries the 4-aspartylphosphate modification. In terms of domain architecture, CheB-type methylesterase spans 146–329; sequence SDTDAALVVI…LPLGDIAPRL (184 aa). Catalysis depends on residues Ser-158, His-185, and Asp-278.

Belongs to the CheB family. Phosphorylated by CheA. Phosphorylation of the N-terminal regulatory domain activates the methylesterase activity.

The protein localises to the cytoplasm. The enzyme catalyses [protein]-L-glutamate 5-O-methyl ester + H2O = L-glutamyl-[protein] + methanol + H(+). It catalyses the reaction L-glutaminyl-[protein] + H2O = L-glutamyl-[protein] + NH4(+). Its function is as follows. Involved in chemotaxis. Part of a chemotaxis signal transduction system that modulates chemotaxis in response to various stimuli. Catalyzes the demethylation of specific methylglutamate residues introduced into the chemoreceptors (methyl-accepting chemotaxis proteins or MCP) by CheR. Also mediates the irreversible deamidation of specific glutamine residues to glutamic acid. The chain is Protein-glutamate methylesterase/protein-glutamine glutaminase 1 from Bordetella avium (strain 197N).